Here is a 194-residue protein sequence, read N- to C-terminus: Peptidyl-tRNA hydrolase (194 aa).

Y17 provides a ligand contact to tRNA. H22 (proton acceptor) is an active-site residue. Y68, N70, and N116 together coordinate tRNA.

Belongs to the PTH family. Monomer.

It is found in the cytoplasm. It carries out the reaction an N-acyl-L-alpha-aminoacyl-tRNA + H2O = an N-acyl-L-amino acid + a tRNA + H(+). In terms of biological role, hydrolyzes ribosome-free peptidyl-tRNAs (with 1 or more amino acids incorporated), which drop off the ribosome during protein synthesis, or as a result of ribosome stalling. Its function is as follows. Catalyzes the release of premature peptidyl moieties from peptidyl-tRNA molecules trapped in stalled 50S ribosomal subunits, and thus maintains levels of free tRNAs and 50S ribosomes. This chain is Peptidyl-tRNA hydrolase, found in Pseudomonas entomophila (strain L48).